A 433-amino-acid polypeptide reads, in one-letter code: Metacaspase-1 (433 aa).

The segment at 1 to 123 is disordered; that stretch reads MYPGRAKPTY…PPSQVQHTGP (123 aa). Positions 9-44 are enriched in low complexity; the sequence is TYNNQQAQQAQSQVGYQTGYSNAQPQQQYYTAPQQQ. Composition is skewed to polar residues over residues 45 to 55 and 83 to 109; these read NVSGSSMSFQH and QQNY…QQPQ. Catalysis depends on residues His222 and Cys278.

Belongs to the peptidase C14B family.

Involved in cell death (apoptosis). The protein is Metacaspase-1 (MCA1) of Kluyveromyces lactis (strain ATCC 8585 / CBS 2359 / DSM 70799 / NBRC 1267 / NRRL Y-1140 / WM37) (Yeast).